Here is a 282-residue protein sequence, read N- to C-terminus: Energy-coupling factor transporter ATP-binding protein EcfA1 (282 aa).

One can recognise an ABC transporter domain in the interval 6–243 (VTVKHLSFTY…EVLIKSAGLE (238 aa)). An ATP-binding site is contributed by 40 to 47 (GHNGSGKS).

It belongs to the ABC transporter superfamily. Energy-coupling factor EcfA family. In terms of assembly, forms a stable energy-coupling factor (ECF) transporter complex composed of 2 membrane-embedded substrate-binding proteins (S component), 2 ATP-binding proteins (A component) and 2 transmembrane proteins (T component).

Its subcellular location is the cell membrane. Its function is as follows. ATP-binding (A) component of a common energy-coupling factor (ECF) ABC-transporter complex. Unlike classic ABC transporters this ECF transporter provides the energy necessary to transport a number of different substrates. The polypeptide is Energy-coupling factor transporter ATP-binding protein EcfA1 (Lactobacillus johnsonii (strain CNCM I-12250 / La1 / NCC 533)).